Here is a 1026-residue protein sequence, read N- to C-terminus: Multidrug resistance protein MdtC (1026 aa).

11 helical membrane passes run 15–35 (ILIA…LPVA), 333–353 (EVEE…FLFL), 360–380 (LIPA…MYLC), 387–407 (LSLM…IVVL), 431–451 (VGFT…PLLL), 463–483 (FAVT…TLTP), 528–548 (LVGV…IAIP), 853–873 (LILI…LYES), 897–917 (LFNA…IGIV), 953–973 (PIMM…LSGG), and 984–1004 (ITIV…TPVV).

Belongs to the resistance-nodulation-cell division (RND) (TC 2.A.6) family. MdtC subfamily. Part of a tripartite efflux system composed of MdtA, MdtB and MdtC. MdtC forms a heteromultimer with MdtB.

Its subcellular location is the cell inner membrane. This Salmonella dublin (strain CT_02021853) protein is Multidrug resistance protein MdtC.